Here is a 528-residue protein sequence, read N- to C-terminus: Catalase (528 aa).

A compositionally biased stretch (basic and acidic residues) spans 1-22 (MADRREKSADQMKLWKESRANQ). Residues 1–32 (MADRREKSADQMKLWKESRANQKPDVLTTGGG) are disordered. Catalysis depends on residues H75 and N148. Residues H194, S201, R203, N213, K237, W303, H305, and K306 each coordinate NADP(+). Heme is bound at residue Y358. The Microbody targeting signal; atypical motif lies at 525 to 528 (KANL).

The protein belongs to the catalase family. As to quaternary structure, homotetramer. The cofactor is heme. It depends on NADP(+) as a cofactor.

Its subcellular location is the peroxisome matrix. The catalysed reaction is 2 H2O2 = O2 + 2 H2O. In terms of biological role, catalyzes the degradation of hydrogen peroxide (H(2)O(2)) generated by peroxisomal oxidases to water and oxygen, thereby protecting cells from the toxic effects of hydrogen peroxide. The sequence is that of Catalase (cat) from Glandirana rugosa (Japanese wrinkled frog).